The sequence spans 623 residues: DNA-directed RNA polymerase III subunit rpc3 (623 aa).

3 disordered regions span residues 131–164, 249–282, and 381–412; these read RSDASKTNGVNEGEHDRPEGENETNGTNGEHVSD, RGVKRSQTNGVSDDNETEKARFDYDDGEDEDEEN, and SLGPTNTPANNRLGKRTFDDTVDDNDDDHGAT. Over residues 273–282 the composition is skewed to acidic residues; sequence DDGEDEDEEN. The segment at 550-571 is leucine-zipper; sequence TYKAMSRCLQRLKFERGRLKDF.

The protein belongs to the RNA polymerase beta chain family. In terms of assembly, component of the RNA polymerase III (Pol III) complex consisting of 17 subunits.

It localises to the nucleus. In terms of biological role, DNA-dependent RNA polymerase catalyzes the transcription of DNA into RNA using the four ribonucleoside triphosphates as substrates. Specific core component of RNA polymerase III which synthesizes small RNAs, such as 5S rRNA and tRNAs. The sequence is that of DNA-directed RNA polymerase III subunit rpc3 (rpc82) from Emericella nidulans (strain FGSC A4 / ATCC 38163 / CBS 112.46 / NRRL 194 / M139) (Aspergillus nidulans).